An 86-amino-acid chain; its full sequence is Small ribosomal subunit protein bS20 (86 aa).

Residues 1 to 21 (MANTKSAIKAARKSLRLHDRN) are disordered.

This sequence belongs to the bacterial ribosomal protein bS20 family.

Functionally, binds directly to 16S ribosomal RNA. The protein is Small ribosomal subunit protein bS20 of Opitutus terrae (strain DSM 11246 / JCM 15787 / PB90-1).